Consider the following 328-residue polypeptide: DNA-directed RNA polymerase subunit alpha (328 aa).

Positions 1-234 (MVREKVKVST…DLFIPFLQAE (234 aa)) are alpha N-terminal domain (alpha-NTD). The tract at residues 268–328 (IALKSIFIDQ…KQIMSILEKK (61 aa)) is alpha C-terminal domain (alpha-CTD).

This sequence belongs to the RNA polymerase alpha chain family. In plastids the minimal PEP RNA polymerase catalytic core is composed of four subunits: alpha, beta, beta', and beta''. When a (nuclear-encoded) sigma factor is associated with the core the holoenzyme is formed, which can initiate transcription.

It localises to the plastid. Its subcellular location is the chloroplast. It carries out the reaction RNA(n) + a ribonucleoside 5'-triphosphate = RNA(n+1) + diphosphate. Its function is as follows. DNA-dependent RNA polymerase catalyzes the transcription of DNA into RNA using the four ribonucleoside triphosphates as substrates. The polypeptide is DNA-directed RNA polymerase subunit alpha (Citrus sinensis (Sweet orange)).